A 142-amino-acid chain; its full sequence is HTH-type transcriptional repressor NsrR (142 aa).

Positions 2 to 129 constitute an HTH rrf2-type domain; that stretch reads QLTSFTDYGL…DRHTLAELVE (128 aa). A DNA-binding region (H-T-H motif) is located at residues 28–51; sequence ITEVTQVYGVSRNHMVKIINQLSH. Residues cysteine 91, cysteine 96, and cysteine 102 each contribute to the [2Fe-2S] cluster site.

[2Fe-2S] cluster is required as a cofactor.

In terms of biological role, nitric oxide-sensitive repressor of genes involved in protecting the cell against nitrosative stress. May require iron for activity. The sequence is that of HTH-type transcriptional repressor NsrR from Proteus mirabilis (strain HI4320).